A 520-amino-acid polypeptide reads, in one-letter code: D-aminopeptidase (520 aa).

Ser-62 functions as the Nucleophile in the catalytic mechanism. Catalysis depends on Lys-65, which acts as the Proton donor/acceptor. The interval 477–487 is important for specificity; it reads QRSMDAPSPGE. Asp-481 serves as a coordination point for substrate.

Belongs to the peptidase S12 family. Homodimer.

The enzyme catalyses Release of an N-terminal D-amino acid from a peptide, Xaa-|-Yaa-, in which Xaa is preferably D-Ala, D-Ser or D-Thr. D-amino acid amides and methyl esters also are hydrolyzed, as is glycine amide.. Its activity is regulated as follows. Inhibited by beta-lactam compounds such as 6-aminopenicillic acid, 7-aminocephalosporanic acid, benzylpenicillin and ampicillin. Inhibited by p-chloromercuribenzoate. Its function is as follows. Hydrolyzes N-terminal residues in D-amino acid-containing peptides. The chain is D-aminopeptidase (dap) from Brucella anthropi (Ochrobactrum anthropi).